The sequence spans 291 residues: MALAVRLLPRLLLSRPLPGWAARLRTLSSAEVKRPLSGLCYLCRRRLGSGAAPFPRVSWASAALALSARGPQRPLLSPLEVASTLPTFPSCPRRTYSTEEQPQQRQKTKMIILGFSNPINWVRTRIYSFLIWAYFDQEFSITEFSEGAKQAFAHVSKLLSQCKFDLLEELVAKETLHVLKEKVTSLPDNHKNALAADIDEIVYTSTGDISIYYDEKGRKFVNILMCFWYLTSANIPSEAISGARVFQVKLGDQNVETKQLLSASYEFQREFTQGVKPDWTIARIEHPKLLE.

A mitochondrion-targeting transit peptide spans 1–96 (MALAVRLLPR…TFPSCPRRTY (96 aa)).

In terms of assembly, interacts with AFG3L2. Interacts with SPG7. Interacts with SMDT1/EMRE (via the N-terminal transit peptide); interaction is direct and takes place before maturation of SMDT1/EMRE.

Its subcellular location is the mitochondrion matrix. Functionally, promotes sorting of SMDT1/EMRE in mitochondria by ensuring its maturation. Interacts with the transit peptide region of SMDT1/EMRE precursor protein in the mitochondrial matrix, leading to protect it against protein degradation by YME1L1, thereby ensuring SMDT1/EMRE maturation by the mitochondrial processing peptidase (PMPCA and PMPCB). This Bos taurus (Bovine) protein is m-AAA protease-interacting protein 1, mitochondrial.